The primary structure comprises 157 residues: Crossover junction endodeoxyribonuclease RuvC (157 aa).

Catalysis depends on residues Asp-7, Glu-67, and Asp-139. Mg(2+) is bound by residues Asp-7, Glu-67, and Asp-139.

The protein belongs to the RuvC family. In terms of assembly, homodimer which binds Holliday junction (HJ) DNA. The HJ becomes 2-fold symmetrical on binding to RuvC with unstacked arms; it has a different conformation from HJ DNA in complex with RuvA. In the full resolvosome a probable DNA-RuvA(4)-RuvB(12)-RuvC(2) complex forms which resolves the HJ. Mg(2+) serves as cofactor.

Its subcellular location is the cytoplasm. The enzyme catalyses Endonucleolytic cleavage at a junction such as a reciprocal single-stranded crossover between two homologous DNA duplexes (Holliday junction).. Its function is as follows. The RuvA-RuvB-RuvC complex processes Holliday junction (HJ) DNA during genetic recombination and DNA repair. Endonuclease that resolves HJ intermediates. Cleaves cruciform DNA by making single-stranded nicks across the HJ at symmetrical positions within the homologous arms, yielding a 5'-phosphate and a 3'-hydroxyl group; requires a central core of homology in the junction. The consensus cleavage sequence is 5'-(A/T)TT(C/G)-3'. Cleavage occurs on the 3'-side of the TT dinucleotide at the point of strand exchange. HJ branch migration catalyzed by RuvA-RuvB allows RuvC to scan DNA until it finds its consensus sequence, where it cleaves and resolves the cruciform DNA. The sequence is that of Crossover junction endodeoxyribonuclease RuvC from Prochlorococcus marinus (strain MIT 9301).